Consider the following 427-residue polypeptide: Histidinol dehydrogenase (427 aa).

NAD(+)-binding residues include Y123, Q185, and N208. Substrate is bound by residues S231, Q253, and H256. The Zn(2+) site is built by Q253 and H256. Residues E321 and H322 each act as proton acceptor in the active site. H322, D355, E409, and H414 together coordinate substrate. D355 serves as a coordination point for Zn(2+). H414 provides a ligand contact to Zn(2+).

Belongs to the histidinol dehydrogenase family. Requires Zn(2+) as cofactor.

It catalyses the reaction L-histidinol + 2 NAD(+) + H2O = L-histidine + 2 NADH + 3 H(+). Its pathway is amino-acid biosynthesis; L-histidine biosynthesis; L-histidine from 5-phospho-alpha-D-ribose 1-diphosphate: step 9/9. In terms of biological role, catalyzes the sequential NAD-dependent oxidations of L-histidinol to L-histidinaldehyde and then to L-histidine. This Oceanobacillus iheyensis (strain DSM 14371 / CIP 107618 / JCM 11309 / KCTC 3954 / HTE831) protein is Histidinol dehydrogenase.